The primary structure comprises 506 residues: Cysteine--tRNA ligase (506 aa).

Cys34 provides a ligand contact to Zn(2+). A 'HIGH' region motif is present at residues 36-46 (PTVYDFAHIGN). Zn(2+) is bound by residues Cys230, His269, and Glu273. The 'KMSKS' region signature appears at 302–306 (KMSKS). Lys305 serves as a coordination point for ATP.

This sequence belongs to the class-I aminoacyl-tRNA synthetase family. As to quaternary structure, monomer. Zn(2+) is required as a cofactor.

It localises to the cytoplasm. It carries out the reaction tRNA(Cys) + L-cysteine + ATP = L-cysteinyl-tRNA(Cys) + AMP + diphosphate. This is Cysteine--tRNA ligase from Brucella ovis (strain ATCC 25840 / 63/290 / NCTC 10512).